Here is a 322-residue protein sequence, read N- to C-terminus: Phosphatidylserine decarboxylase proenzyme (322 aa).

Residues Asp-90, His-147, and Ser-254 each act as charge relay system; for autoendoproteolytic cleavage activity in the active site. The active-site Schiff-base intermediate with substrate; via pyruvic acid; for decarboxylase activity is the Ser-254. Ser-254 is modified (pyruvic acid (Ser); by autocatalysis). The tract at residues 293 to 322 (PDAEPAPLPAEEIEAEHDASPLVDDKKDQV) is disordered. Residues 308–322 (EHDASPLVDDKKDQV) are compositionally biased toward basic and acidic residues.

It belongs to the phosphatidylserine decarboxylase family. PSD-B subfamily. Prokaryotic type I sub-subfamily. Heterodimer of a large membrane-associated beta subunit and a small pyruvoyl-containing alpha subunit. The cofactor is pyruvate. Is synthesized initially as an inactive proenzyme. Formation of the active enzyme involves a self-maturation process in which the active site pyruvoyl group is generated from an internal serine residue via an autocatalytic post-translational modification. Two non-identical subunits are generated from the proenzyme in this reaction, and the pyruvate is formed at the N-terminus of the alpha chain, which is derived from the carboxyl end of the proenzyme. The autoendoproteolytic cleavage occurs by a canonical serine protease mechanism, in which the side chain hydroxyl group of the serine supplies its oxygen atom to form the C-terminus of the beta chain, while the remainder of the serine residue undergoes an oxidative deamination to produce ammonia and the pyruvoyl prosthetic group on the alpha chain. During this reaction, the Ser that is part of the protease active site of the proenzyme becomes the pyruvoyl prosthetic group, which constitutes an essential element of the active site of the mature decarboxylase.

The protein resides in the cell membrane. The enzyme catalyses a 1,2-diacyl-sn-glycero-3-phospho-L-serine + H(+) = a 1,2-diacyl-sn-glycero-3-phosphoethanolamine + CO2. The protein operates within phospholipid metabolism; phosphatidylethanolamine biosynthesis; phosphatidylethanolamine from CDP-diacylglycerol: step 2/2. Catalyzes the formation of phosphatidylethanolamine (PtdEtn) from phosphatidylserine (PtdSer). This chain is Phosphatidylserine decarboxylase proenzyme, found in Escherichia coli (strain 55989 / EAEC).